The chain runs to 418 residues: Queuine tRNA-ribosyltransferase accessory subunit 2 (418 aa).

The Zn(2+) site is built by C325, C327, C330, and H356.

Belongs to the queuine tRNA-ribosyltransferase family. QTRT2 subfamily. As to quaternary structure, heterodimer of a catalytic subunit and an accessory subunit. It depends on Zn(2+) as a cofactor.

The protein localises to the cytoplasm. Non-catalytic subunit of the queuine tRNA-ribosyltransferase (TGT) that catalyzes the base-exchange of a guanine (G) residue with queuine (Q) at position 34 (anticodon wobble position) in tRNAs with GU(N) anticodons (tRNA-Asp, -Asn, -His and -Tyr), resulting in the hypermodified nucleoside queuosine (7-(((4,5-cis-dihydroxy-2-cyclopenten-1-yl)amino)methyl)-7-deazaguanosine). The chain is Queuine tRNA-ribosyltransferase accessory subunit 2 from Drosophila erecta (Fruit fly).